The primary structure comprises 157 residues: DNA gyrase inhibitor (157 aa).

It belongs to the DNA gyrase inhibitor family. In terms of assembly, interacts with DNA gyrase.

The protein localises to the cytoplasm. Its function is as follows. Inhibits the supercoiling activity of DNA gyrase. Acts by inhibiting DNA gyrase at an early step, prior to (or at the step of) binding of DNA by the gyrase. It protects cells against toxins that target DNA gyrase, by inhibiting activity of these toxins and reducing the formation of lethal double-strand breaks in the cell. This Cronobacter sakazakii (strain ATCC BAA-894) (Enterobacter sakazakii) protein is DNA gyrase inhibitor.